Consider the following 239-residue polypeptide: MNLYEYLLEGVRHFTLIDPDKSVDYLKIAKYALEAGTDGILIGGSLGIRESQIAQVVKDIKNISNVPVVLFPGSLTQLTDLADGVLFLSVLNSLDPYFIIGAQIQGAVLIAKHYPRLEVISTAYIIVGDGGAAGFVSMSKPIPYTRPDIAAAYALAANYIGFKAVYLEAGSGASQPVPPEMVRAVRRAFPRVLIVGGGIKSGEIARAIARERPNVIVTGTLAEESPEKLGEIVRAIKQA.

Asp-18 and Ser-45 together coordinate Mg(2+). Residues 166-172 (YLEAGSG), 197-198 (GG), and 219-220 (GT) each bind sn-glycerol 1-phosphate.

The protein belongs to the GGGP/HepGP synthase family. Group II subfamily. Requires Mg(2+) as cofactor.

It is found in the cytoplasm. The enzyme catalyses sn-glycerol 1-phosphate + (2E,6E,10E)-geranylgeranyl diphosphate = sn-3-O-(geranylgeranyl)glycerol 1-phosphate + diphosphate. It participates in membrane lipid metabolism; glycerophospholipid metabolism. Prenyltransferase that catalyzes the transfer of the geranylgeranyl moiety of geranylgeranyl diphosphate (GGPP) to the C3 hydroxyl of sn-glycerol-1-phosphate (G1P). This reaction is the first ether-bond-formation step in the biosynthesis of archaeal membrane lipids. This chain is Geranylgeranylglyceryl phosphate synthase, found in Pyrobaculum aerophilum (strain ATCC 51768 / DSM 7523 / JCM 9630 / CIP 104966 / NBRC 100827 / IM2).